We begin with the raw amino-acid sequence, 179 residues long: Large ribosomal subunit protein uL5 (179 aa).

It belongs to the universal ribosomal protein uL5 family. As to quaternary structure, part of the 50S ribosomal subunit; part of the 5S rRNA/L5/L18/L25 subcomplex. Contacts the 5S rRNA and the P site tRNA. Forms a bridge to the 30S subunit in the 70S ribosome.

Functionally, this is one of the proteins that bind and probably mediate the attachment of the 5S RNA into the large ribosomal subunit, where it forms part of the central protuberance. In the 70S ribosome it contacts protein S13 of the 30S subunit (bridge B1b), connecting the 2 subunits; this bridge is implicated in subunit movement. Contacts the P site tRNA; the 5S rRNA and some of its associated proteins might help stabilize positioning of ribosome-bound tRNAs. The polypeptide is Large ribosomal subunit protein uL5 (Alkaliphilus metalliredigens (strain QYMF)).